A 423-amino-acid chain; its full sequence is Glycine amidinotransferase, mitochondrial (423 aa).

Residues 1–43 constitute a mitochondrion transit peptide; sequence MLRVRCLRGGSRGAEAVHYIGSRLGRTLTGWVQRTFQSTQAAT. S46 and S49 each carry phosphoserine. D170 is an arginine binding site. Active-site residues include D254 and H303. Residues D305, R322, S354, and S355 each coordinate arginine. K385 carries the N6-acetyllysine modification. Catalysis depends on C407, which acts as the Amidino-cysteine intermediate.

The protein belongs to the amidinotransferase family. As to quaternary structure, homodimer. There is an equilibrium between the monomeric and dimeric forms, shifted towards the side of the monomer. As to expression, expressed in brain, heart, kidney, liver, lung, salivary gland and skeletal muscle tissue, with the highest expression in kidney. Biallelically expressed in placenta and fetal tissues.

It localises to the mitochondrion inner membrane. Its subcellular location is the cytoplasm. It catalyses the reaction L-arginine + glycine = guanidinoacetate + L-ornithine. The catalysed reaction is 4-aminobutanoate + L-arginine = 4-guanidinobutanoate + L-ornithine. It carries out the reaction beta-alanine + L-arginine = 3-guanidinopropanoate + L-ornithine. The enzyme catalyses taurine + L-arginine = taurocyamine + L-ornithine. It functions in the pathway amine and polyamine biosynthesis; creatine biosynthesis; creatine from L-arginine and glycine: step 1/2. Its function is as follows. Transamidinase that catalyzes the transfer of the amidino group of L-arginine onto the amino moiety of acceptor metabolites such as glycine, beta-alanine, gamma-aminobutyric acid (GABA) and taurine yielding the corresponding guanidine derivatives. Catalyzes the rate-limiting step of creatine biosynthesis, namely the transfer of the amidino group from L-arginine to glycine to generate guanidinoacetate, which is then methylated by GAMT to form creatine. Provides creatine as a source for ATP generation in tissues with high energy demands, in particular skeletal muscle, heart and brain. The sequence is that of Glycine amidinotransferase, mitochondrial (GATM) from Homo sapiens (Human).